The primary structure comprises 365 residues: tRNA N6-adenosine threonylcarbamoyltransferase (365 aa).

Fe cation-binding residues include His111 and His115. Substrate is bound by residues 140 to 144 (IVSGG), Asp173, Gly186, and Asn298. Asp323 is a Fe cation binding site.

The protein belongs to the KAE1 / TsaD family. The cofactor is Fe(2+).

It localises to the cytoplasm. It catalyses the reaction L-threonylcarbamoyladenylate + adenosine(37) in tRNA = N(6)-L-threonylcarbamoyladenosine(37) in tRNA + AMP + H(+). Its function is as follows. Required for the formation of a threonylcarbamoyl group on adenosine at position 37 (t(6)A37) in tRNAs that read codons beginning with adenine. Is involved in the transfer of the threonylcarbamoyl moiety of threonylcarbamoyl-AMP (TC-AMP) to the N6 group of A37, together with TsaE and TsaB. TsaD likely plays a direct catalytic role in this reaction. The protein is tRNA N6-adenosine threonylcarbamoyltransferase of Thermomicrobium roseum (strain ATCC 27502 / DSM 5159 / P-2).